Reading from the N-terminus, the 392-residue chain is S-adenosylmethionine synthase (392 aa).

Histidine 15 contacts ATP. Aspartate 17 is a binding site for Mg(2+). Glutamate 43 lines the K(+) pocket. L-methionine is bound by residues glutamate 56 and glutamine 99. The flexible loop stretch occupies residues glutamine 99 to glutamate 109. Residues aspartate 173–lysine 175, lysine 239–phenylalanine 240, aspartate 248, arginine 254–lysine 255, alanine 271, and lysine 275 contribute to the ATP site. L-methionine is bound at residue aspartate 248. Lysine 279 contacts L-methionine.

Belongs to the AdoMet synthase family. In terms of assembly, homotetramer; dimer of dimers. It depends on Mg(2+) as a cofactor. Requires K(+) as cofactor.

The protein resides in the cytoplasm. The catalysed reaction is L-methionine + ATP + H2O = S-adenosyl-L-methionine + phosphate + diphosphate. It participates in amino-acid biosynthesis; S-adenosyl-L-methionine biosynthesis; S-adenosyl-L-methionine from L-methionine: step 1/1. Catalyzes the formation of S-adenosylmethionine (AdoMet) from methionine and ATP. The overall synthetic reaction is composed of two sequential steps, AdoMet formation and the subsequent tripolyphosphate hydrolysis which occurs prior to release of AdoMet from the enzyme. In Finegoldia magna (strain ATCC 29328 / DSM 20472 / WAL 2508) (Peptostreptococcus magnus), this protein is S-adenosylmethionine synthase.